Consider the following 255-residue polypeptide: GTP cyclohydrolase III (255 aa).

It belongs to the archaeal-type GTP cyclohydrolase family.

The enzyme catalyses GTP + 3 H2O = 2-amino-5-formylamino-6-(5-phospho-D-ribosylamino)pyrimidin-4(3H)-one + 2 phosphate + 2 H(+). Functionally, catalyzes the formation of 2-amino-5-formylamino-6-ribofuranosylamino-4(3H)-pyrimidinone ribonucleotide monophosphate and inorganic phosphate from GTP. Also has an independent pyrophosphate phosphohydrolase activity. This chain is GTP cyclohydrolase III, found in Methanosphaera stadtmanae (strain ATCC 43021 / DSM 3091 / JCM 11832 / MCB-3).